We begin with the raw amino-acid sequence, 331 residues long: Cathepsin S (331 aa).

An N-terminal signal peptide occupies residues Met1–Ala16. Positions Gln17–Ile114 are cleaved as a propeptide — activation peptide. Asn104 carries an N-linked (GlcNAc...) asparagine glycan. Disulfide bonds link Cys126–Cys224, Cys136–Cys180, Cys170–Cys213, and Cys272–Cys320. The active site involves Cys139. Catalysis depends on residues His278 and Asn298.

The protein belongs to the peptidase C1 family. As to quaternary structure, monomer.

It is found in the lysosome. The protein resides in the secreted. Its subcellular location is the cytoplasmic vesicle. The protein localises to the phagosome. The enzyme catalyses Similar to cathepsin L, but with much less activity on Z-Phe-Arg-|-NHMec, and more activity on the Z-Val-Val-Arg-|-Xaa compound.. Thiol protease. Key protease responsible for the removal of the invariant chain from MHC class II molecules and MHC class II antigen presentation. The bond-specificity of this proteinase is in part similar to the specificities of cathepsin L. The chain is Cathepsin S (CTSS) from Homo sapiens (Human).